The sequence spans 261 residues: Peroxiredoxin PRX1, mitochondrial (261 aa).

A mitochondrion-targeting transit peptide spans 1 to 13; it reads MFSRICSAQLKRT. Positions 49–212 constitute a Thioredoxin domain; that stretch reads LRINSDAPNF…VLRVIDALQL (164 aa). Serine 53 carries the phosphoserine modification. Cysteine 91 functions as the Cysteine sulfenic acid (-SOH) intermediate in the catalytic mechanism.

Belongs to the peroxiredoxin family. Prx6 subfamily. Homodimer; disulfide-linked.

Its subcellular location is the mitochondrion. It carries out the reaction a hydroperoxide + 2 glutathione = an alcohol + glutathione disulfide + H2O. The enzyme catalyses [glutaredoxin]-dithiol + a hydroperoxide = [glutaredoxin]-disulfide + an alcohol + H2O. Functionally, thiol-specific peroxidase that catalyzes the reduction of hydrogen peroxide and organic hydroperoxides to water and alcohols, respectively. Plays a role in cell protection against oxidative stress by detoxifying peroxides and as sensor of hydrogen peroxide-mediated signaling events. Involved in mitochondrial protection of cadmium-induced oxidative stress. The polypeptide is Peroxiredoxin PRX1, mitochondrial (Saccharomyces cerevisiae (strain ATCC 204508 / S288c) (Baker's yeast)).